The primary structure comprises 252 residues: Flap endonuclease Xni (252 aa).

A Mg(2+)-binding site is contributed by Asp-105. The 91-residue stretch at 161–251 (VESTQFIDYL…NVNLKQFRIE (91 aa)) folds into the 5'-3' exonuclease domain. The K(+) site is built by Leu-172, Ala-173, Pro-181, Val-183, and Ile-186. Residues 185 to 190 (GIGPKS) form an interaction with DNA region.

It belongs to the Xni family. Mg(2+) serves as cofactor. Requires K(+) as cofactor.

Its function is as follows. Has flap endonuclease activity. During DNA replication, flap endonucleases cleave the 5'-overhanging flap structure that is generated by displacement synthesis when DNA polymerase encounters the 5'-end of a downstream Okazaki fragment. This Shewanella halifaxensis (strain HAW-EB4) protein is Flap endonuclease Xni.